The sequence spans 416 residues: MESYKVMLNGPAPWGFRLQGGKDFSMPLSISRLTPGGKAAQAGVGVGDWVLYIDGESTGTMTHIEAQNRIRACGDRLCLTLSRAQNHLGKPQKDSLPCSEPPKYNFAPSTALNKTARPFGASSPPNPRPGLVTKPVTYVPLAPACTPQHNGQVSVPDPSPGAAMKTEPGLAPRTPAATPGPTSRPPWAVDPSFAERYAPDKTSTVLSKHSQPATPTPMQNRSSIVQAAQQAPESPGRTPLCYKCNKIIRGRYLVALGHYYHPEEFTCCQCRKVLDEGGFFEEKGSIFCPKCYDTRYAPSCAKCKKKITGEVMHALKMTWHVQCFTCAACKTPIRNRAFYMEEGQPYCERDYEKMFGTKCRGCDFKIDAGDRFLEALGFSWHDTCFVCAICQTNLEGKTFYSKKDKPLCKSHAFSHV.

In terms of domain architecture, PDZ spans methionine 1 to glutamine 85. Disordered regions lie at residues cysteine 145–proline 191 and threonine 202–arginine 221. The segment covering proline 168–proline 181 has biased composition (low complexity). LIM zinc-binding domains are found at residues proline 239–alanine 297, proline 298–threonine 357, and lysine 358–valine 416.

In terms of assembly, interacts with various PKC isoforms through the LIM zinc-binding domains. Interacts with TPM2. Interacts with TBX4 and TBX5.

It is found in the cytoplasm. The protein resides in the cytoskeleton. It localises to the myofibril. The protein localises to the sarcomere. Its subcellular location is the z line. Functionally, may function as a scaffold on which the coordinated assembly of proteins can occur. May play a role as an adapter that, via its PDZ domain, localizes LIM-binding proteins to actin filaments of both skeletal muscle and nonmuscle tissues. May be involved in bone formation. The chain is PDZ and LIM domain protein 7 (PDLIM7) from Gallus gallus (Chicken).